The sequence spans 244 residues: 5-oxoprolinase subunit A (244 aa).

It belongs to the LamB/PxpA family. In terms of assembly, forms a complex composed of PxpA, PxpB and PxpC.

The enzyme catalyses 5-oxo-L-proline + ATP + 2 H2O = L-glutamate + ADP + phosphate + H(+). Functionally, catalyzes the cleavage of 5-oxoproline to form L-glutamate coupled to the hydrolysis of ATP to ADP and inorganic phosphate. This chain is 5-oxoprolinase subunit A, found in Escherichia coli (strain SMS-3-5 / SECEC).